The primary structure comprises 110 residues: Large ribosomal subunit protein uL22 (110 aa).

It belongs to the universal ribosomal protein uL22 family. As to quaternary structure, part of the 50S ribosomal subunit.

Functionally, this protein binds specifically to 23S rRNA; its binding is stimulated by other ribosomal proteins, e.g. L4, L17, and L20. It is important during the early stages of 50S assembly. It makes multiple contacts with different domains of the 23S rRNA in the assembled 50S subunit and ribosome. The globular domain of the protein is located near the polypeptide exit tunnel on the outside of the subunit, while an extended beta-hairpin is found that lines the wall of the exit tunnel in the center of the 70S ribosome. The chain is Large ribosomal subunit protein uL22 from Shewanella frigidimarina (strain NCIMB 400).